The sequence spans 1697 residues: Neurexin-3a (1697 aa).

Residues methionine 1–glycine 23 form the signal peptide. The Laminin G-like 1 domain occupies leucine 24–cysteine 198. The Extracellular segment spans residues leucine 24 to threonine 1622. The EGF-like 1 domain maps to isoleucine 194–asparagine 231. 3 disulfides stabilise this stretch: cysteine 198–cysteine 209, cysteine 203–cysteine 218, and cysteine 220–cysteine 230. Laminin G-like domains are found at residues valine 258–cysteine 455 and aspartate 462–cysteine 654. Residues aspartate 304, leucine 321, and methionine 389 each contribute to the Ca(2+) site. 5 cysteine pairs are disulfide-bonded: cysteine 419-cysteine 455, cysteine 625-cysteine 654, cysteine 662-cysteine 673, cysteine 667-cysteine 682, and cysteine 684-cysteine 694. The EGF-like 2 domain occupies serine 658–glutamate 695. Laminin G-like domains follow at residues isoleucine 700–cysteine 872 and aspartate 886–cysteine 1061. 4 disulfides stabilise this stretch: cysteine 1033/cysteine 1061, cysteine 1077/cysteine 1088, cysteine 1082/cysteine 1097, and cysteine 1099/cysteine 1109. The EGF-like 3 domain occupies proline 1073–asparagine 1110. Residues threonine 1114 to valine 1314 form the Laminin G-like 6 domain. 3 disordered regions span residues threonine 1345 to methionine 1366, leucine 1442 to proline 1479, and proline 1520 to histidine 1557. The segment covering glycine 1446–glycine 1461 has biased composition (acidic residues). Residues glycine 1527 to proline 1547 show a composition bias toward polar residues. The helical transmembrane segment at glycine 1623–methionine 1643 threads the bilayer. Topologically, residues tyrosine 1644 to valine 1697 are cytoplasmic. Residues asparagine 1665–valine 1697 are disordered.

It belongs to the neurexin family.

It localises to the membrane. Functionally, neuronal cell surface protein that may be involved in cell recognition and cell adhesion. The chain is Neurexin-3a (nrxn3a) from Danio rerio (Zebrafish).